The chain runs to 1022 residues: MGKGAASEKYQPAATSENAKNSKKSKSKTTDLDELKKEVSLDDHKLNLDELHQKYGTDLTQGLTPARAKEILARDGPNALTPPPTTPEWIKFCRQLFGGFSILLWTGAILCFLAYGIQVATVDNPANDNLYLGVVLSTVVIITGCFSYYQEAKSSKIMDSFKNMVPQQALVIRDGEKSSINAEQVVVGDLVEVKGGDRIPADLRIISACSCKVDNSSLTGESEPQSRSPEYSSENPLETKNIAFFSTNCVEGTARGIVINIGDHTVMGRIATLASGLEVGQTPIAAEIEHFIHIITGVAVFLGVSFFILSLILGYTWLEAVIFLIGIIVANVPEGLLATVTVCLTLTAKRMARKNCLVKNLEAVETLGSTSTICSDKTGTLTQNRMTVAHMWFDNQIHEADTTENQSGISFDKTSLSWNALSRIAALCNRAVFQAGQDSVPILKRSVAGDASESALLKCIELCCGSVSQMRDRNPKIVEIPFNSTNKYQLSIHENDKADSRYLLVMKGAPERILDRCSTILLNGEDKPLNEEMKEAFQNAYLELGGLGERVLGFCHLKLSTSKFPEGYPFDVEEPNFPITDLCFVGLMSMIDPPRAAVPDAVGKCRSAGIKVIMVTGDHPITAKAIAKGVGIISEGNETVEDIAARLNIPVNQVNPRDAKACVVHGTDLKDLSHENLDDILHYHTEIVFARTSPQQKLIIVEGCQRQGAIVAVTGDGVNDSPALKKADIGVAMGIAGSDVSKQAADMILLDDNFASIVTGVEEGRLIFDNLKKSIAYTLTSNIPEITPFLVFIIANVPLPLGTVTILCIDLGTDMVPAISLAYERAESDIMKRQPRNPKTDKLVNERLISMAYGQIGMIQALGGFFSYFVILAENGFLPIDLIGIREKWDELWTQDLEDSYGQQWTYEQRKIVEYTCHTSFFVSIVIVQWADLIICKTRRNSIFQQGMKNKILIFGLFEETALAAFLSYTPGTDIALRMYPLKPSWWFCAFPYSLIIFLYDEARRFILRRNPGGWVEQETYY.

Positions 1–5 are excised as a propeptide; it reads MGKGA. Residues 1–34 form a disordered region; it reads MGKGAASEKYQPAATSENAKNSKKSKSKTTDLDE. Residues 6–87 lie on the Cytoplasmic side of the membrane; the sequence is ASEKYQPAAT…NALTPPPTTP (82 aa). Phosphoserine; by PKC is present on serine 16. Residues 82 to 84 form an interaction with phosphoinositide-3 kinase region; that stretch reads PPP. A helical membrane pass occupies residues 88 to 108; that stretch reads EWIKFCRQLFGGFSILLWTGA. Residues 109–131 are Lumenal-facing; that stretch reads ILCFLAYGIQVATVDNPANDNLY. A helical membrane pass occupies residues 132–152; that stretch reads LGVVLSTVVIITGCFSYYQEA. At 153 to 288 the chain is on the cytoplasmic side; that stretch reads KSSKIMDSFK…VGQTPIAAEI (136 aa). A disordered region spans residues 215-235; it reads NSSLTGESEPQSRSPEYSSEN. Residues 289–308 traverse the membrane as a helical segment; it reads EHFIHIITGVAVFLGVSFFI. Residues 309–320 are Lumenal-facing; it reads LSLILGYTWLEA. Residues 321–338 traverse the membrane as a helical segment; the sequence is VIFLIGIIVANVPEGLLA. Over 339–771 the chain is Cytoplasmic; that stretch reads TVTVCLTLTA…EEGRLIFDNL (433 aa). Aspartate 376 serves as the catalytic 4-aspartylphosphate intermediate. Mg(2+) contacts are provided by aspartate 716 and aspartate 720. A helical transmembrane segment spans residues 772–791; that stretch reads KKSIAYTLTSNIPEITPFLV. Residues 792-801 lie on the Lumenal side of the membrane; the sequence is FIIANVPLPL. Residues 802 to 822 form a helical membrane-spanning segment; sequence GTVTILCIDLGTDMVPAISLA. Residues 823-842 lie on the Cytoplasmic side of the membrane; that stretch reads YERAESDIMKRQPRNPKTDK. A helical transmembrane segment spans residues 843–865; it reads LVNERLISMAYGQIGMIQALGGF. Over 866 to 917 the chain is Lumenal; it reads FSYFVILAENGFLPIDLIGIREKWDELWTQDLEDSYGQQWTYEQRKIVEYTC. The chain crosses the membrane as a helical span at residues 918–937; sequence HTSFFVSIVIVQWADLIICK. Topologically, residues 938–950 are cytoplasmic; sequence TRRNSIFQQGMKN. Serine 942 bears the Phosphoserine; by PKA mark. A helical membrane pass occupies residues 951–969; the sequence is KILIFGLFEETALAAFLSY. The Lumenal segment spans residues 970-984; that stretch reads TPGTDIALRMYPLKP. The chain crosses the membrane as a helical span at residues 985–1005; that stretch reads SWWFCAFPYSLIIFLYDEARR. At 1006-1022 the chain is on the cytoplasmic side; sequence FILRRNPGGWVEQETYY.

Belongs to the cation transport ATPase (P-type) (TC 3.A.3) family. Type IIC subfamily. The sodium/potassium-transporting ATPase is composed of a catalytic alpha subunit, an auxiliary non-catalytic beta subunit and an additional regulatory subunit.

Its subcellular location is the cell membrane. The enzyme catalyses K(+)(out) + Na(+)(in) + ATP + H2O = K(+)(in) + Na(+)(out) + ADP + phosphate + H(+). In terms of biological role, this is the catalytic component of the active enzyme, which catalyzes the hydrolysis of ATP coupled with the exchange of sodium and potassium ions across the plasma membrane. This action creates the electrochemical gradient of sodium and potassium ions, providing the energy for active transport of various nutrients. In Tetronarce californica (Pacific electric ray), this protein is Sodium/potassium-transporting ATPase subunit alpha.